A 290-amino-acid polypeptide reads, in one-letter code: MNGKEGPGGFRKRKHDTFPHNQRREGKDASLSSPVMLAFKSFQQELDARHDKYERLVKLSRDITVESKRTIFLLHRITSAPDMEEILTESESKLDGVRQKILQVAQELSGEDMHQFHRAVTTGLQEYVEAVSFQHFIKTRSLISMEEINKQLTFTAEDSGKESKTPPAEGQEKQLVTWRLKLTPVDYLLGVADLTGELMRMCINSVGNGDIDTPFEVSQFLRQVYDGFSFIGNTGPYEVSKKLYTLKQSLAKVENACYALKVRGSEIPKHMLADVFSVKTDMIDQEESIS.

The interval 1–31 (MNGKEGPGGFRKRKHDTFPHNQRREGKDASL) is disordered. Basic and acidic residues predominate over residues 16–28 (DTFPHNQRREGKD). Residues 73-208 (LLHRITSAPD…MRMCINSVGN (136 aa)) are interaction with C1D. Glu129 and Glu197 together coordinate Mg(2+). Residue Lys279 forms a Glycyl lysine isopeptide (Lys-Gly) (interchain with G-Cter in SUMO2) linkage.

The protein belongs to the translin family. Ring-shaped heterooctamer of six TSN and two TSNAX subunits. Interacts with GOLGA3, TSNAXIP1, SUN1 and AKAP9. Interacts with the homodimeric form of C1D following gamma-radiation. Interacts with TSN and C1D in a mutually exclusive manner. Sumoylated with SUMO1. In terms of tissue distribution, detected in heart, brain, lung, liver, kidney and testis.

It is found in the cytoplasm. It localises to the perinuclear region. Its subcellular location is the golgi apparatus. The protein resides in the nucleus. Its function is as follows. Acts in combination with TSN as an endonuclease involved in the activation of the RNA-induced silencing complex (RISC). Possible role in spermatogenesis. The protein is Translin-associated protein X (Tsnax) of Mus musculus (Mouse).